Here is a 131-residue protein sequence, read N- to C-terminus: Sulfurtransferase TusD (131 aa).

Cysteine 81 (cysteine persulfide intermediate) is an active-site residue.

This sequence belongs to the DsrE/TusD family. As to quaternary structure, heterohexamer, formed by a dimer of trimers. The hexameric TusBCD complex contains 2 copies each of TusB, TusC and TusD. The TusBCD complex interacts with TusE.

It is found in the cytoplasm. Part of a sulfur-relay system required for 2-thiolation of 5-methylaminomethyl-2-thiouridine (mnm(5)s(2)U) at tRNA wobble positions. Accepts sulfur from TusA and transfers it in turn to TusE. The protein is Sulfurtransferase TusD of Photorhabdus laumondii subsp. laumondii (strain DSM 15139 / CIP 105565 / TT01) (Photorhabdus luminescens subsp. laumondii).